Here is a 245-residue protein sequence, read N- to C-terminus: 2,3-bisphosphoglycerate-dependent phosphoglycerate mutase (245 aa).

Residues 8-15 (RHGQSLWN), 21-22 (TG), Arg-60, 87-90 (ERHY), Lys-98, 114-115 (RR), and 183-184 (GN) each bind substrate. The active-site Tele-phosphohistidine intermediate is the His-9. The Proton donor/acceptor role is filled by Glu-87.

Belongs to the phosphoglycerate mutase family. BPG-dependent PGAM subfamily.

The catalysed reaction is (2R)-2-phosphoglycerate = (2R)-3-phosphoglycerate. It participates in carbohydrate degradation; glycolysis; pyruvate from D-glyceraldehyde 3-phosphate: step 3/5. Its function is as follows. Catalyzes the interconversion of 2-phosphoglycerate and 3-phosphoglycerate. The polypeptide is 2,3-bisphosphoglycerate-dependent phosphoglycerate mutase (Bacillus cereus (strain G9842)).